A 131-amino-acid chain; its full sequence is Ribonuclease P protein component (131 aa).

This sequence belongs to the RnpA family. Consists of a catalytic RNA component (M1 or rnpB) and a protein subunit.

The enzyme catalyses Endonucleolytic cleavage of RNA, removing 5'-extranucleotides from tRNA precursor.. Its function is as follows. RNaseP catalyzes the removal of the 5'-leader sequence from pre-tRNA to produce the mature 5'-terminus. It can also cleave other RNA substrates such as 4.5S RNA. The protein component plays an auxiliary but essential role in vivo by binding to the 5'-leader sequence and broadening the substrate specificity of the ribozyme. This is Ribonuclease P protein component from Cyanothece sp. (strain PCC 7425 / ATCC 29141).